Reading from the N-terminus, the 251-residue chain is Hydroxyacylglutathione hydrolase (251 aa).

Zn(2+) contacts are provided by His53, His55, Asp57, His58, His110, Asp127, and His165.

Belongs to the metallo-beta-lactamase superfamily. Glyoxalase II family. As to quaternary structure, monomer. Zn(2+) is required as a cofactor.

It catalyses the reaction an S-(2-hydroxyacyl)glutathione + H2O = a 2-hydroxy carboxylate + glutathione + H(+). It participates in secondary metabolite metabolism; methylglyoxal degradation; (R)-lactate from methylglyoxal: step 2/2. Thiolesterase that catalyzes the hydrolysis of S-D-lactoyl-glutathione to form glutathione and D-lactic acid. The sequence is that of Hydroxyacylglutathione hydrolase from Yersinia pestis.